A 1527-amino-acid chain; its full sequence is Rho guanine nucleotide exchange factor 11 (1527 aa).

The segment at 1-56 (MSIRLPHSIDRSASKKQSHLSSPIASWLSSLSSLGDSTPERTSPSHHRQPSDTSET) is disordered. Phosphoserine is present on residues Ser2, Ser30, Ser32, and Ser51. Low complexity predominate over residues 19–37 (HLSSPIASWLSSLSSLGDS). One can recognise a PDZ domain in the interval 64–143 (CVIIQKDQHG…LTLLGSSPPS (80 aa)). The disordered stretch occupies residues 216-247 (PCGETSQRTCEGRLSVDSQEADSGLDSGTERF). 2 positions are modified to phosphoserine: Ser262 and Ser268. Thr271 carries the phosphothreonine modification. 2 positions are modified to phosphoserine: Ser272 and Ser288. The 181-residue stretch at 323-503 (ESDIIFQDLE…NTFMSHAGIR (181 aa)) folds into the RGSL domain. The stretch at 461-487 (LRERQMAEKQLAALGDILSKYEEDRSA) forms a coiled coil. 2 disordered regions span residues 506 to 569 (ESRS…QSIK) and 582 to 687 (NSHQ…GRRS). Residues 509-519 (SSCTAEKTQSA) are compositionally biased toward polar residues. Composition is skewed to basic and acidic residues over residues 539–551 (SKKE…DKKR) and 624–645 (KGRE…RSDV). Phosphoserine is present on residues Ser643 and Ser671. Residues 656–672 (LHQSASSSASSLSTRSL) show a composition bias toward low complexity. Phosphothreonine is present on residues Thr676 and Thr680. The DH domain occupies 742–931 (DRQEVINELF…REILKFVNEA (190 aa)). The 115-residue stretch at 973–1087 (KMIHEGPLTW…WMELLEEAVQ (115 aa)) folds into the PH domain. 3 disordered regions span residues 1090 to 1184 (TKHP…NRGI), 1231 to 1321 (QAAG…TEPA), and 1379 to 1411 (AGPL…PQPY). A compositionally biased stretch (basic and acidic residues) spans 1126 to 1138 (EVYHTEKEPKKLP). A compositionally biased stretch (polar residues) spans 1242–1251 (PTPSVVSITS). Phosphoserine is present on residues Ser1299 and Ser1304. Over residues 1312–1321 (AAEAASTEPA) the composition is skewed to low complexity. Phosphoserine is present on residues Ser1462 and Ser1463. A phosphothreonine mark is found at Thr1467 and Thr1480. The tract at residues 1480–1527 (TDYSLSPPAKEALASDSQNGQEQGSCPEEGSDIALEDSATDTAVSPGP) is disordered. Ser1485 carries the post-translational modification Phosphoserine. Residues 1494–1503 (SDSQNGQEQG) are compositionally biased toward polar residues. Positions 1508–1518 (EGSDIALEDSA) are enriched in acidic residues.

As to quaternary structure, interacts with RHOA, GNA13 and SLC1A6. Interacts with GNA12, PLXNB1 and PLXNB2. Interacts (via DH domain) with GCSAM (via C-terminus). Found in a complex with ARHGEF11 and ARHGEF12; binding to ARHGEF11 and ARHGEF12 enhances CDC42 GEF activity of PLEKHG4B, and PLEKHG4B, in turn, inhibits ARHGEF11- and ARHGEF12-mediated RHOA activation. Phosphorylated by MAP kinase p38 (MAPK11, MAPK12, MAPK13 and/or MAPK14). In terms of processing, ubiquitinated by the BCR(KLHL20) E3 ubiquitin ligase complex when previously phosphorylated by MAP kinase p38 (MAPK11, MAPK12, MAPK13 and/or MAPK14), leading to its degradation, thereby restricting RhoA activity and facilitating growth cone spreading and neurite outgrowth.

Its subcellular location is the cytoplasm. It is found in the membrane. Its function is as follows. May play a role in the regulation of RhoA GTPase by guanine nucleotide-binding alpha-12 (GNA12) and alpha-13 (GNA13). Acts as guanine nucleotide exchange factor (GEF) for RhoA GTPase and may act as GTPase-activating protein (GAP) for GNA12 and GNA13. Involved in neurotrophin-induced neurite outgrowth. The protein is Rho guanine nucleotide exchange factor 11 (Arhgef11) of Rattus norvegicus (Rat).